We begin with the raw amino-acid sequence, 308 residues long: MKELSVNNLLGIKYINENDINLVFETADHFKEVINRPIKKVPSLRDITIANIFFENSTRTKLSFELAQKRLSADVINFAASSSSVTKGETLVDTVNNILSMKVDMVVMRHASPGAAVFLSKNVKASIVNAGDGAHEHPTQALLDAYTIREKLGDVAGKKIVIVGDILHSRVALSNIYSLQKLGAEVRVCGPKTLIPKYIEALGVKVEPNLRKALEWCDVANMLRVQNERLDISYFPSTREYAMQYGLDKNLLDSLNKEIVIMHPGPINRGVEITSDVADSRQSVILNQVENGVAVRMAVIYLLASKIK.

2 residues coordinate carbamoyl phosphate: Arg59 and Thr60. Lys87 lines the L-aspartate pocket. 3 residues coordinate carbamoyl phosphate: Arg109, His137, and Gln140. L-aspartate-binding residues include Arg170 and Arg224. The carbamoyl phosphate site is built by Gly265 and Pro266.

Belongs to the aspartate/ornithine carbamoyltransferase superfamily. ATCase family. As to quaternary structure, heterododecamer (2C3:3R2) of six catalytic PyrB chains organized as two trimers (C3), and six regulatory PyrI chains organized as three dimers (R2).

The catalysed reaction is carbamoyl phosphate + L-aspartate = N-carbamoyl-L-aspartate + phosphate + H(+). The protein operates within pyrimidine metabolism; UMP biosynthesis via de novo pathway; (S)-dihydroorotate from bicarbonate: step 2/3. Its function is as follows. Catalyzes the condensation of carbamoyl phosphate and aspartate to form carbamoyl aspartate and inorganic phosphate, the committed step in the de novo pyrimidine nucleotide biosynthesis pathway. This chain is Aspartate carbamoyltransferase catalytic subunit, found in Flavobacterium psychrophilum (strain ATCC 49511 / DSM 21280 / CIP 103535 / JIP02/86).